We begin with the raw amino-acid sequence, 156 residues long: ATP synthase subunit b 1 (156 aa).

A helical transmembrane segment spans residues Leu7 to Leu29.

It belongs to the ATPase B chain family. As to quaternary structure, F-type ATPases have 2 components, F(1) - the catalytic core - and F(0) - the membrane proton channel. F(1) has five subunits: alpha(3), beta(3), gamma(1), delta(1), epsilon(1). F(0) has three main subunits: a(1), b(2) and c(10-14). The alpha and beta chains form an alternating ring which encloses part of the gamma chain. F(1) is attached to F(0) by a central stalk formed by the gamma and epsilon chains, while a peripheral stalk is formed by the delta and b chains.

It is found in the cell inner membrane. F(1)F(0) ATP synthase produces ATP from ADP in the presence of a proton or sodium gradient. F-type ATPases consist of two structural domains, F(1) containing the extramembraneous catalytic core and F(0) containing the membrane proton channel, linked together by a central stalk and a peripheral stalk. During catalysis, ATP synthesis in the catalytic domain of F(1) is coupled via a rotary mechanism of the central stalk subunits to proton translocation. Functionally, component of the F(0) channel, it forms part of the peripheral stalk, linking F(1) to F(0). The polypeptide is ATP synthase subunit b 1 (Vibrio campbellii (strain ATCC BAA-1116)).